Here is a 141-residue protein sequence, read N- to C-terminus: Large ribosomal subunit protein uL16 (141 aa).

This sequence belongs to the universal ribosomal protein uL16 family. In terms of assembly, part of the 50S ribosomal subunit.

Its function is as follows. Binds 23S rRNA and is also seen to make contacts with the A and possibly P site tRNAs. This chain is Large ribosomal subunit protein uL16, found in Geobacillus thermodenitrificans (strain NG80-2).